Reading from the N-terminus, the 171-residue chain is Large ribosomal subunit protein uL10 (171 aa).

The protein belongs to the universal ribosomal protein uL10 family. As to quaternary structure, part of the ribosomal stalk of the 50S ribosomal subunit. The N-terminus interacts with L11 and the large rRNA to form the base of the stalk. The C-terminus forms an elongated spine to which L12 dimers bind in a sequential fashion forming a multimeric L10(L12)X complex.

Forms part of the ribosomal stalk, playing a central role in the interaction of the ribosome with GTP-bound translation factors. In Corynebacterium jeikeium (strain K411), this protein is Large ribosomal subunit protein uL10.